The primary structure comprises 327 residues: DNA-directed RNA polymerase subunit alpha (327 aa).

The segment at 1–233 (MVREKVKVST…NLFIPFLHVE (233 aa)) is alpha N-terminal domain (alpha-NTD). The tract at residues 265–327 (KELAFQYIFI…KKILDILEKK (63 aa)) is alpha C-terminal domain (alpha-CTD).

This sequence belongs to the RNA polymerase alpha chain family. As to quaternary structure, in plastids the minimal PEP RNA polymerase catalytic core is composed of four subunits: alpha, beta, beta', and beta''. When a (nuclear-encoded) sigma factor is associated with the core the holoenzyme is formed, which can initiate transcription.

Its subcellular location is the plastid. The protein resides in the chloroplast. It catalyses the reaction RNA(n) + a ribonucleoside 5'-triphosphate = RNA(n+1) + diphosphate. DNA-dependent RNA polymerase catalyzes the transcription of DNA into RNA using the four ribonucleoside triphosphates as substrates. This chain is DNA-directed RNA polymerase subunit alpha, found in Olimarabidopsis pumila (Dwarf rocket).